Consider the following 1173-residue polypeptide: Clustered mitochondria protein homolog (1173 aa).

The segment covering 1-21 (MSTIDLPTSSLPGSSGDPSGT) has biased composition (low complexity). A disordered region spans residues 1–25 (MSTIDLPTSSLPGSSGDPSGTEMSH). One can recognise a Clu domain in the interval 316–565 (VPHRADLSRT…SLFPLDAQFL (250 aa)). The disordered stretch occupies residues 888 to 910 (KFTGKKGNKKKRNLGKSQNTTNR). The span at 890–901 (TGKKGNKKKRNL) shows a compositional bias: basic residues. The TPR repeat unit spans residues 984–1017 (ARAYCQLAMIYHQLEKKEEAVELARKAVIVCERF).

Belongs to the CLU family. In terms of assembly, may associate with the eukaryotic translation initiation factor 3 (eIF-3) complex.

The protein localises to the cytoplasm. MRNA-binding protein involved in proper cytoplasmic distribution of mitochondria. This chain is Clustered mitochondria protein homolog, found in Schizosaccharomyces pombe (strain 972 / ATCC 24843) (Fission yeast).